The primary structure comprises 207 residues: NADH-quinone oxidoreductase subunit C (207 aa).

It belongs to the complex I 30 kDa subunit family. NDH-1 is composed of 14 different subunits. Subunits NuoB, C, D, E, F, and G constitute the peripheral sector of the complex.

It localises to the cell inner membrane. It catalyses the reaction a quinone + NADH + 5 H(+)(in) = a quinol + NAD(+) + 4 H(+)(out). In terms of biological role, NDH-1 shuttles electrons from NADH, via FMN and iron-sulfur (Fe-S) centers, to quinones in the respiratory chain. The immediate electron acceptor for the enzyme in this species is believed to be ubiquinone. Couples the redox reaction to proton translocation (for every two electrons transferred, four hydrogen ions are translocated across the cytoplasmic membrane), and thus conserves the redox energy in a proton gradient. In Rickettsia felis (strain ATCC VR-1525 / URRWXCal2) (Rickettsia azadi), this protein is NADH-quinone oxidoreductase subunit C.